We begin with the raw amino-acid sequence, 64 residues long: Large ribosomal subunit protein uL30 (64 aa).

This sequence belongs to the universal ribosomal protein uL30 family. As to quaternary structure, part of the 50S ribosomal subunit.

The sequence is that of Large ribosomal subunit protein uL30 from Methylorubrum extorquens (strain CM4 / NCIMB 13688) (Methylobacterium extorquens).